Reading from the N-terminus, the 305-residue chain is tRNA-cytidine(32) 2-sulfurtransferase (305 aa).

Residues 1–20 are disordered; sequence MTAVLPLPHPLADPAPRDPR. A PP-loop motif motif is present at residues 59-64; the sequence is SGGKDS. Residues Cys-134, Cys-137, and Cys-225 each coordinate [4Fe-4S] cluster. A compositionally biased stretch (low complexity) spans 282–293; the sequence is DAPPDLAPDPGA. Residues 282-305 form a disordered region; it reads DAPPDLAPDPGAWLTASDATHDSD.

Belongs to the TtcA family. Homodimer. Requires Mg(2+) as cofactor. [4Fe-4S] cluster serves as cofactor.

Its subcellular location is the cytoplasm. It catalyses the reaction cytidine(32) in tRNA + S-sulfanyl-L-cysteinyl-[cysteine desulfurase] + AH2 + ATP = 2-thiocytidine(32) in tRNA + L-cysteinyl-[cysteine desulfurase] + A + AMP + diphosphate + H(+). It participates in tRNA modification. Its function is as follows. Catalyzes the ATP-dependent 2-thiolation of cytidine in position 32 of tRNA, to form 2-thiocytidine (s(2)C32). The sulfur atoms are provided by the cysteine/cysteine desulfurase (IscS) system. In Xanthomonas oryzae pv. oryzae (strain MAFF 311018), this protein is tRNA-cytidine(32) 2-sulfurtransferase.